The following is a 95-amino-acid chain: Small ribosomal subunit protein bS6 (95 aa).

It belongs to the bacterial ribosomal protein bS6 family.

Its function is as follows. Binds together with bS18 to 16S ribosomal RNA. This is Small ribosomal subunit protein bS6 from Clostridium perfringens (strain ATCC 13124 / DSM 756 / JCM 1290 / NCIMB 6125 / NCTC 8237 / Type A).